The primary structure comprises 346 residues: Elongation factor Ts (346 aa).

Residues 80–83 (TDFV) are involved in Mg(2+) ion dislocation from EF-Tu.

It belongs to the EF-Ts family.

Its subcellular location is the cytoplasm. In terms of biological role, associates with the EF-Tu.GDP complex and induces the exchange of GDP to GTP. It remains bound to the aminoacyl-tRNA.EF-Tu.GTP complex up to the GTP hydrolysis stage on the ribosome. The polypeptide is Elongation factor Ts (Streptococcus suis (strain 98HAH33)).